Consider the following 151-residue polypeptide: Regulatory protein RecX (151 aa).

It belongs to the RecX family.

The protein localises to the cytoplasm. Functionally, modulates RecA activity. This Chlorobium phaeobacteroides (strain BS1) protein is Regulatory protein RecX.